Reading from the N-terminus, the 184-residue chain is Endoribonuclease YbeY (184 aa).

His151, His155, and His161 together coordinate Zn(2+).

The protein belongs to the endoribonuclease YbeY family. Requires Zn(2+) as cofactor.

Its subcellular location is the cytoplasm. Functionally, single strand-specific metallo-endoribonuclease involved in late-stage 70S ribosome quality control and in maturation of the 3' terminus of the 16S rRNA. The protein is Endoribonuclease YbeY of Prochlorococcus marinus (strain NATL2A).